The following is a 221-amino-acid chain: Zingipain-2 (221 aa).

Disulfide bonds link Cys24/Cys65 and Cys58/Cys98. Cys27 is an active-site residue. N-linked (GlcNAc...) asparagine glycans are attached at residues Asn99 and Asn156. Residues Cys155 and Cys206 are joined by a disulfide bond. Residue His161 is part of the active site.

It belongs to the peptidase C1 family.

The catalysed reaction is Preferential cleavage of peptides with a proline residue at the P2 position.. Its function is as follows. Cysteine proteinase with a specific activity toward peptides with a proline residue at the P2 position. This chain is Zingipain-2, found in Zingiber officinale (Ginger).